The following is a 431-amino-acid chain: MAQKIQSVKGMNDLLPVKQKDFKLTAAFWQAFEDTVGRWTRAYGYQQIRTPIVEQTGLFVRSIGEETDVVGKEMYTFSDSNDSLSLSLRPEGTASCLRAVVEHNLLYNSPQKLWYMGPMFRRERPQKGRYRQFHQVGIEALGFEGPDIDAEIIAMSADLWEKLGIREYLTLEINSLGNREERAAHRAALVEYLTRYEDKLDEDSKRRLKTNPLRVLDTKNPDLQEICNAAPRLVDYLGEDSQNHYVRFKAMLDGLGIQYIENPRLVRGLDYYNQTVFEWTTDKLGAQATVCGGGRYDGLIEELGGKPAPSIGFAMGIERLLLLVSEYGSLEVNAAPDVYAMHQGEGADLQVMKYAQALRAQGFNVMQHSGYQSLKAQMKKADNSGARFALIVAQDELANGTVTLKDMNGAHGQQTVAAEDLTPTLQQWKNA.

This sequence belongs to the class-II aminoacyl-tRNA synthetase family. Homodimer.

The protein resides in the cytoplasm. It catalyses the reaction tRNA(His) + L-histidine + ATP = L-histidyl-tRNA(His) + AMP + diphosphate + H(+). This is Histidine--tRNA ligase from Neisseria meningitidis serogroup B (strain ATCC BAA-335 / MC58).